The primary structure comprises 291 residues: Serine hydrolase BPHL (291 aa).

The first 37 residues, 1–37 (MATATVRPAAQRLRLLLSPLKSRICVPQAEPVATFGT), serve as a signal peptide directing secretion. The region spanning 62 to 173 (AILLLPGMLG…ANAYVTEEDS (112 aa)) is the AB hydrolase-1 domain. K74 carries the N6-acetyllysine; alternate modification. The residue at position 74 (K74) is an N6-succinyllysine; alternate. 2 positions are modified to N6-acetyllysine: K86 and K119. K126 carries the post-translational modification N6-acetyllysine; alternate. K126 carries the N6-succinyllysine; alternate modification. The active-site Nucleophile is the S139. K184 is modified (N6-succinyllysine). K191 carries the post-translational modification N6-acetyllysine; alternate. Residue K191 is modified to N6-succinyllysine; alternate. K217 carries the N6-acetyllysine modification. E221 lines the Mg(2+) pocket. K243 carries the N6-acetyllysine modification. The active-site Charge relay system is D244. N6-acetyllysine; alternate occurs at positions 260 and 271. Residues K260 and K271 each carry the N6-succinyllysine; alternate modification. The active-site Charge relay system is the H272.

This sequence belongs to the AB hydrolase superfamily. Lipase family. In terms of assembly, monomer. May also form homodimers.

The protein resides in the mitochondrion. The catalysed reaction is L-homocysteine thiolactone + H2O = L-homocysteine + H(+). It catalyses the reaction valacyclovir + H2O = acyclovir + L-valine + H(+). Functionally, specific alpha-amino acid ester serine hydrolase that prefers small, hydrophobic, and aromatic side chains and does not have a stringent requirement for the leaving group other than preferring a primary alcohol. Has homocysteine-thiolactonase activity (in vitro) and may play a significant role in the detoxification of homocysteine thiolactone in vivo. Catalyzes the hydrolytic activation of amino acid ester prodrugs of nucleoside analogs such as valacyclovir and valganciclovir, converting them into their active forms (acyclovir and ganciclovir). In Mus musculus (Mouse), this protein is Serine hydrolase BPHL (Bphl).